An 87-amino-acid chain; its full sequence is U3-theraphotoxin-Hhn1q (87 aa).

Residues 1–24 form the signal peptide; that stretch reads MVNMKASMFLTFAGLVLLFVVCYA. Residues 25 to 52 constitute a propeptide that is removed on maturation; the sequence is SESEEKEFPKEMLSSIFAVDNDFKQEER. Disulfide bonds link Cys54/Cys67, Cys61/Cys72, and Cys66/Cys79.

Belongs to the neurotoxin 10 (Hwtx-1) family. 51 (Hntx-8) subfamily. Hntx-8 sub-subfamily. As to expression, expressed by the venom gland.

The protein resides in the secreted. Functionally, ion channel inhibitor. This chain is U3-theraphotoxin-Hhn1q, found in Cyriopagopus hainanus (Chinese bird spider).